Reading from the N-terminus, the 363-residue chain is Mitogen-activated protein kinase kinase 2 (363 aa).

Serine 56 carries the phosphoserine modification. Residues 70-330 (LDMVKVIGKG…AKELMEHPFL (261 aa)) form the Protein kinase domain. ATP contacts are provided by residues 76-84 (IGKGSSGVV) and lysine 99. The active-site Proton acceptor is the aspartate 192. Residues threonine 220, threonine 226, and threonine 230 each carry the phosphothreonine modification.

Belongs to the protein kinase superfamily. STE Ser/Thr protein kinase family. MAP kinase kinase subfamily. As to quaternary structure, interacts with MEKK1, MPK4 and MPK6. May form a ternary complex composed of MEKK1 and MKK1/MKK2 and MPK4. Interacts with MPK10 and MPK11. Interacts with MAPKKK5 mainly in the cytosol. In terms of processing, phosphorylation at Thr-220 and Thr-226 by MAP kinase kinase kinases positively regulates kinase activity. Phosphorylated by MEKK1 in response to cold. Phosphorylated by MAPKKK5.

The catalysed reaction is L-seryl-[protein] + ATP = O-phospho-L-seryl-[protein] + ADP + H(+). It carries out the reaction L-threonyl-[protein] + ATP = O-phospho-L-threonyl-[protein] + ADP + H(+). The enzyme catalyses L-tyrosyl-[protein] + ATP = O-phospho-L-tyrosyl-[protein] + ADP + H(+). With respect to regulation, activated in response to cold and salt stresses through serine and threonine phosphorylation by MEKK1. MEKK1, MKK1/MKK2 and MPK4 function in a signaling pathway that modulates the expression of genes responding to biotic and abiotic stresses and also plays an important role in pathogen defense by negatively regulating innate immunity. Plays a role in abiotic stress tolerance and plant disease resistance through activation of MPK4 and MPK6 by phosphorylation. Acts redundantly with MKK1. The protein is Mitogen-activated protein kinase kinase 2 (MKK2) of Arabidopsis thaliana (Mouse-ear cress).